The following is a 667-amino-acid chain: Alpha-1,4-glucan:maltose-1-phosphate maltosyltransferase (667 aa).

Alpha-maltose 1-phosphate-binding residues include K261, Q321, and D356. Catalysis depends on D392, which acts as the Nucleophile. Position 393 (N393) interacts with alpha-maltose 1-phosphate. Residue E421 is the Proton donor of the active site. Position 534 to 535 (534 to 535) interacts with alpha-maltose 1-phosphate; that stretch reads KY.

This sequence belongs to the glycosyl hydrolase 13 family. GlgE subfamily. In terms of assembly, homodimer.

It carries out the reaction alpha-maltose 1-phosphate + [(1-&gt;4)-alpha-D-glucosyl](n) = [(1-&gt;4)-alpha-D-glucosyl](n+2) + phosphate. Its function is as follows. Maltosyltransferase that uses maltose 1-phosphate (M1P) as the sugar donor to elongate linear or branched alpha-(1-&gt;4)-glucans. Is involved in a branched alpha-glucan biosynthetic pathway from trehalose, together with TreS, Mak and GlgB. The chain is Alpha-1,4-glucan:maltose-1-phosphate maltosyltransferase from Methylacidiphilum infernorum (isolate V4) (Methylokorus infernorum (strain V4)).